Consider the following 206-residue polypeptide: Holliday junction branch migration complex subunit RuvA (206 aa).

A domain I region spans residues 1-64 (MIGKLKGVLD…EDMIRLYGFR (64 aa)). The domain II stretch occupies residues 65-144 (TVLEREWFRL…AFAGEAAGAI (80 aa)). The flexible linker stretch occupies residues 145–154 (GLKQDLGEGV). Positions 154-206 (VAPAPVSDAVSALANLGYSRDIAANAVAAALKSAGEGADTGTLIRLGLKELAR) are domain III.

Belongs to the RuvA family. Homotetramer. Forms an RuvA(8)-RuvB(12)-Holliday junction (HJ) complex. HJ DNA is sandwiched between 2 RuvA tetramers; dsDNA enters through RuvA and exits via RuvB. An RuvB hexamer assembles on each DNA strand where it exits the tetramer. Each RuvB hexamer is contacted by two RuvA subunits (via domain III) on 2 adjacent RuvB subunits; this complex drives branch migration. In the full resolvosome a probable DNA-RuvA(4)-RuvB(12)-RuvC(2) complex forms which resolves the HJ.

Its subcellular location is the cytoplasm. In terms of biological role, the RuvA-RuvB-RuvC complex processes Holliday junction (HJ) DNA during genetic recombination and DNA repair, while the RuvA-RuvB complex plays an important role in the rescue of blocked DNA replication forks via replication fork reversal (RFR). RuvA specifically binds to HJ cruciform DNA, conferring on it an open structure. The RuvB hexamer acts as an ATP-dependent pump, pulling dsDNA into and through the RuvAB complex. HJ branch migration allows RuvC to scan DNA until it finds its consensus sequence, where it cleaves and resolves the cruciform DNA. The protein is Holliday junction branch migration complex subunit RuvA of Chelativorans sp. (strain BNC1).